A 1377-amino-acid chain; its full sequence is Protein RhsA (1377 aa).

28 consecutive repeat copies span residues glycine 330–threonine 352, glycine 353–alanine 374, glycine 375–aspartate 417, glycine 418–alanine 438, glycine 439–aspartate 460, glycine 461–aspartate 481, glycine 482–aspartate 502, glycine 503–threonine 525, glycine 526–serine 546, glycine 547–glutamate 567, glycine 568–glutamine 588, glycine 589–aspartate 609, glycine 610–glycine 629, glycine 630–asparagine 650, glycine 651–aspartate 671, glycine 672–glutamate 691, glycine 692–lysine 711, glycine 712–glutamate 734, glycine 735–histidine 758, glycine 808–phenylalanine 828, glycine 829–serine 850, leucine 851–proline 871, arginine 872–asparagine 894, leucine 895–alanine 930, arginine 931–threonine 959, aspartate 960–glutamate 984, glutamate 985–serine 1019, and glycine 1162–glutamine 1186. The interval glycine 330–glutamine 1186 is 28 X approximate tandem repeats. Positions aspartate 1356–arginine 1377 are disordered.

Belongs to the RHS family.

Rhs elements have a nonessential function. They may play an important role in the natural ecology of the cell. This chain is Protein RhsA (rhsA), found in Escherichia coli (strain K12).